The primary structure comprises 311 residues: tRNA-cytidine(32) 2-sulfurtransferase (311 aa).

The PP-loop motif signature appears at 47-52; that stretch reads SGGKDS. [4Fe-4S] cluster contacts are provided by cysteine 122, cysteine 125, and cysteine 213.

This sequence belongs to the TtcA family. In terms of assembly, homodimer. Mg(2+) is required as a cofactor. The cofactor is [4Fe-4S] cluster.

It is found in the cytoplasm. It catalyses the reaction cytidine(32) in tRNA + S-sulfanyl-L-cysteinyl-[cysteine desulfurase] + AH2 + ATP = 2-thiocytidine(32) in tRNA + L-cysteinyl-[cysteine desulfurase] + A + AMP + diphosphate + H(+). The protein operates within tRNA modification. Catalyzes the ATP-dependent 2-thiolation of cytidine in position 32 of tRNA, to form 2-thiocytidine (s(2)C32). The sulfur atoms are provided by the cysteine/cysteine desulfurase (IscS) system. This Escherichia coli O81 (strain ED1a) protein is tRNA-cytidine(32) 2-sulfurtransferase.